Consider the following 151-residue polypeptide: Transcriptional repressor NrdR (151 aa).

Residues 3–34 (CPHCGNCDDKVMESRTLAQGDCIRRRRECLAC) fold into a zinc finger. The ATP-cone domain occupies 49-141 (FMVIKKDGRR…VYKQFSNLDE (93 aa)).

The protein belongs to the NrdR family. Zn(2+) serves as cofactor.

In terms of biological role, negatively regulates transcription of bacterial ribonucleotide reductase nrd genes and operons by binding to NrdR-boxes. This is Transcriptional repressor NrdR from Treponema denticola (strain ATCC 35405 / DSM 14222 / CIP 103919 / JCM 8153 / KCTC 15104).